A 473-amino-acid chain; its full sequence is Biotin-dependent acetyl-/propionyl-coenzyme A carboxylase beta6 subunit (473 aa).

Residues 1 to 224 (MTIMAPEAVG…QGHFDRSKAE (224 aa)) form the CoA carboxyltransferase N-terminal domain. The CoA carboxyltransferase C-terminal domain maps to 225-473 (AGDTDIHALL…RRGRHKNIPL (249 aa)).

It belongs to the AccD/PCCB family. In terms of assembly, the biotin-dependent acyl-CoA carboxylase complex is composed of AccA3, which contains the biotin carboxylase (BC) and biotin carboxyl carrier protein (BCCP) domains, and AccD6, which contains the carboxyl transferase (CT) domain.

It carries out the reaction N(6)-carboxybiotinyl-L-lysyl-[protein] + acetyl-CoA = N(6)-biotinyl-L-lysyl-[protein] + malonyl-CoA. The enzyme catalyses N(6)-carboxybiotinyl-L-lysyl-[protein] + propanoyl-CoA = methylmalonyl-CoA + N(6)-biotinyl-L-lysyl-[protein]. Its pathway is lipid metabolism; fatty acid biosynthesis. It functions in the pathway lipid metabolism; mycolic acid biosynthesis. Its function is as follows. Component of a biotin-dependent acyl-CoA carboxylase complex. This subunit transfers the CO2 from carboxybiotin to the CoA ester substrate. When associated with the alpha3 subunit AccA3, is involved in the carboxylation of acetyl-CoA and propionyl-CoA. This is Biotin-dependent acetyl-/propionyl-coenzyme A carboxylase beta6 subunit (accD6) from Mycobacterium bovis (strain ATCC BAA-935 / AF2122/97).